The following is a 309-amino-acid chain: Homoserine O-succinyltransferase (309 aa).

Catalysis depends on cysteine 142, which acts as the Acyl-thioester intermediate. Substrate-binding residues include lysine 163 and serine 192. Histidine 235 functions as the Proton acceptor in the catalytic mechanism. The active site involves glutamate 237. Position 249 (arginine 249) interacts with substrate.

Belongs to the MetA family.

It is found in the cytoplasm. It carries out the reaction L-homoserine + succinyl-CoA = O-succinyl-L-homoserine + CoA. The protein operates within amino-acid biosynthesis; L-methionine biosynthesis via de novo pathway; O-succinyl-L-homoserine from L-homoserine: step 1/1. Its function is as follows. Transfers a succinyl group from succinyl-CoA to L-homoserine, forming succinyl-L-homoserine. This is Homoserine O-succinyltransferase from Enterobacter sp. (strain 638).